A 521-amino-acid polypeptide reads, in one-letter code: Acetylcholine receptor subunit beta-like 1 (521 aa).

A signal peptide spans 1-24 (MESSCKSWLLCSILVLVAFSLVSA). Over 25–235 (SEDEERLVRD…ITFYIIIRRK (211 aa)) the chain is Extracellular. A glycan (N-linked (GlcNAc...) asparagine) is linked at asparagine 48. Cysteine 152 and cysteine 166 are disulfide-bonded. Transmembrane regions (helical) follow at residues 236-260 (TLFY…VFYL), 268-286 (VTLG…LLVS), and 302-323 (YLLF…IINW). The Cytoplasmic segment spans residues 324 to 481 (NFRGPRTHRM…WKYVAMVIDR (158 aa)). Residues 482 to 500 (LQLYIFFIVTTAGTVGILM) form a helical membrane-spanning segment.

This sequence belongs to the ligand-gated ion channel (TC 1.A.9) family. Acetylcholine receptor (TC 1.A.9.1) subfamily. In terms of tissue distribution, CNS in embryos.

It is found in the postsynaptic cell membrane. The protein localises to the cell membrane. In terms of biological role, after binding acetylcholine, the AChR responds by an extensive change in conformation that affects all subunits and leads to opening of an ion-conducting channel across the plasma membrane. The polypeptide is Acetylcholine receptor subunit beta-like 1 (nAChRbeta1) (Drosophila melanogaster (Fruit fly)).